The following is a 452-amino-acid chain: Pup--protein ligase (452 aa).

Glu-9 is a binding site for Mg(2+). Arg-53 lines the ATP pocket. Residue Tyr-55 participates in Mg(2+) binding. The active-site Proton acceptor is Asp-57. Glu-63 contributes to the Mg(2+) binding site. ATP contacts are provided by Thr-66 and Trp-419.

Belongs to the Pup ligase/Pup deamidase family. Pup-conjugating enzyme subfamily.

It carries out the reaction ATP + [prokaryotic ubiquitin-like protein]-L-glutamate + [protein]-L-lysine = ADP + phosphate + N(6)-([prokaryotic ubiquitin-like protein]-gamma-L-glutamyl)-[protein]-L-lysine.. Its pathway is protein degradation; proteasomal Pup-dependent pathway. It functions in the pathway protein modification; protein pupylation. Functionally, catalyzes the covalent attachment of the prokaryotic ubiquitin-like protein modifier Pup to the proteasomal substrate proteins, thereby targeting them for proteasomal degradation. This tagging system is termed pupylation. The ligation reaction involves the side-chain carboxylate of the C-terminal glutamate of Pup and the side-chain amino group of a substrate lysine. The protein is Pup--protein ligase of Mycobacterium ulcerans (strain Agy99).